A 488-amino-acid chain; its full sequence is Calcium/calmodulin-dependent protein kinase type II subunit delta (488 aa).

An N-acetylalanine modification is found at Ala2. One can recognise a Protein kinase domain in the interval 14-272; that stretch reads YQLFEELGKG…ASEALKHPWI (259 aa). Residues 20–28 and Lys43 contribute to the ATP site; that span reads LGKGAFSVV. The active-site Proton acceptor is Asp136. An autoinhibitory domain region spans residues 283 to 292; the sequence is HRQETVDCLK. A Phosphothreonine; by autocatalysis modification is found at Thr287. Positions 291–301 are calmodulin-binding; it reads LKKFNARRKLK. 2 positions are modified to phosphothreonine; by autocatalysis: Thr306 and Thr307. Ser315 carries the post-translational modification Phosphoserine. Lys317 bears the N6-acetyllysine mark. Residues Ser318 and Ser340 each carry the phosphoserine modification. Residues 325 to 350 are disordered; the sequence is GVKKRKSSSSVQMMESTESSNTTIED. The segment covering 332–347 has biased composition (polar residues); it reads SSSVQMMESTESSNTT. Thr341 carries the post-translational modification Phosphothreonine. Ser343 carries the phosphoserine modification. A phosphothreonine mark is found at Thr346 and Thr347. Ser414 bears the Phosphoserine mark.

Belongs to the protein kinase superfamily. CAMK Ser/Thr protein kinase family. CaMK subfamily. As to quaternary structure, CAMK2 is composed of 4 different chains: alpha (CAMK2A), beta (CAMK2B), gamma (CAMK2G), and delta (CAMK2D). The different isoforms assemble into homo- or heteromultimeric holoenzymes composed of 12 subunits with two hexameric rings stacked one on top of the other. Interacts with RRAD and CACNB2. In terms of processing, autophosphorylation of Thr-287 following activation by Ca(2+)/calmodulin. Phosphorylation of Thr-287 locks the kinase into an activated state.

Its subcellular location is the cell membrane. The protein resides in the sarcolemma. It is found in the sarcoplasmic reticulum membrane. It carries out the reaction L-seryl-[protein] + ATP = O-phospho-L-seryl-[protein] + ADP + H(+). The catalysed reaction is L-threonyl-[protein] + ATP = O-phospho-L-threonyl-[protein] + ADP + H(+). Activated by Ca(2+)/calmodulin. Binding of calmodulin results in conformational change that relieves intrasteric autoinhibition and allows autophosphorylation of Thr-287 which turns the kinase in a constitutively active form and confers to the kinase a Ca(2+)-independent activity. Calcium/calmodulin-dependent protein kinase involved in the regulation of Ca(2+) homeostatis and excitation-contraction coupling (ECC) in heart by targeting ion channels, transporters and accessory proteins involved in Ca(2+) influx into the myocyte, Ca(2+) release from the sarcoplasmic reticulum (SR), SR Ca(2+) uptake and Na(+) and K(+) channel transport. Targets also transcription factors and signaling molecules to regulate heart function. In its activated form, is involved in the pathogenesis of dilated cardiomyopathy and heart failure. Contributes to cardiac decompensation and heart failure by regulating SR Ca(2+) release via direct phosphorylation of RYR2 Ca(2+) channel on 'Ser-2808'. In the nucleus, phosphorylates the MEF2 repressor HDAC4, promoting its nuclear export and binding to 14-3-3 protein, and expression of MEF2 and genes involved in the hypertrophic program. Is essential for left ventricular remodeling responses to myocardial infarction. In pathological myocardial remodeling acts downstream of the beta adrenergic receptor signaling cascade to regulate key proteins involved in ECC. Regulates Ca(2+) influx to myocytes by binding and phosphorylating the L-type Ca(2+) channel subunit beta-2 CACNB2. In addition to Ca(2+) channels, can target and regulate the cardiac sarcolemmal Na(+) channel Nav1.5/SCN5A and the K+ channel Kv4.3/KCND3, which contribute to arrhythmogenesis in heart failure. Phosphorylates phospholamban (PLN/PLB), an endogenous inhibitor of SERCA2A/ATP2A2, contributing to the enhancement of SR Ca(2+) uptake that may be important in frequency-dependent acceleration of relaxation (FDAR) and maintenance of contractile function during acidosis. May participate in the modulation of skeletal muscle function in response to exercise, by regulating SR Ca(2+) transport through phosphorylation of PLN/PLB and triadin, a ryanodine receptor-coupling factor. In response to interferon-gamma (IFN-gamma) stimulation, catalyzes phosphorylation of STAT1, stimulating the JAK-STAT signaling pathway. The protein is Calcium/calmodulin-dependent protein kinase type II subunit delta (CAMK2D) of Bos taurus (Bovine).